Consider the following 184-residue polypeptide: uncharacterized protein (184 aa).

This is an uncharacterized protein from Chlamydia pneumoniae (Chlamydophila pneumoniae).